Here is a 167-residue protein sequence, read N- to C-terminus: UPF0303 protein mlr5144 (167 aa).

Belongs to the UPF0303 family.

This Mesorhizobium japonicum (strain LMG 29417 / CECT 9101 / MAFF 303099) (Mesorhizobium loti (strain MAFF 303099)) protein is UPF0303 protein mlr5144.